Reading from the N-terminus, the 499-residue chain is Protein singed wings 2 (499 aa).

An N-terminal signal peptide occupies residues 1–29 (MPSGVFQKRPKAAETISLFCMILIRLSRA). 2 LRR repeats span residues 154-175 (ELHT…TFKR) and 178-199 (PLKV…LLLP). Residues 210 to 265 (NPWNCTRNFKWLLLQPEKGRLVVDRDELICTDRKYKERQMLMVMHYKLELKRQCQS) form the LRRCT 1 domain. LRR repeat units lie at residues 307–328 (NTTT…RDNP), 332–353 (HVVD…EDTY), and 357–378 (NFRL…ALDN). The LRRCT 2 domain occupies 394–449 (NPWHCTCKFGSRMRELLTKYKDIVRDAWNVSCTYRLDDDQLLAKVLTLSRQEMCNL).

Its function is as follows. Has a role in the ecdysone induced cascade; probably indirect control of 'late' ecdysone genes. The chain is Protein singed wings 2 from Drosophila melanogaster (Fruit fly).